Reading from the N-terminus, the 154-residue chain is SsrA-binding protein (154 aa).

It belongs to the SmpB family.

It is found in the cytoplasm. Functionally, required for rescue of stalled ribosomes mediated by trans-translation. Binds to transfer-messenger RNA (tmRNA), required for stable association of tmRNA with ribosomes. tmRNA and SmpB together mimic tRNA shape, replacing the anticodon stem-loop with SmpB. tmRNA is encoded by the ssrA gene; the 2 termini fold to resemble tRNA(Ala) and it encodes a 'tag peptide', a short internal open reading frame. During trans-translation Ala-aminoacylated tmRNA acts like a tRNA, entering the A-site of stalled ribosomes, displacing the stalled mRNA. The ribosome then switches to translate the ORF on the tmRNA; the nascent peptide is terminated with the 'tag peptide' encoded by the tmRNA and targeted for degradation. The ribosome is freed to recommence translation, which seems to be the essential function of trans-translation. The protein is SsrA-binding protein of Synechococcus sp. (strain JA-3-3Ab) (Cyanobacteria bacterium Yellowstone A-Prime).